Reading from the N-terminus, the 101-residue chain is Small ribosomal subunit protein uS10 (101 aa).

Belongs to the universal ribosomal protein uS10 family. As to quaternary structure, part of the 30S ribosomal subunit.

Its function is as follows. Involved in the binding of tRNA to the ribosomes. The protein is Small ribosomal subunit protein uS10 of Corynebacterium jeikeium (strain K411).